The primary structure comprises 163 residues: Nucleotide-binding protein SYNPCC7002_A1983 (163 aa).

The protein belongs to the YajQ family.

Its function is as follows. Nucleotide-binding protein. The protein is Nucleotide-binding protein SYNPCC7002_A1983 of Picosynechococcus sp. (strain ATCC 27264 / PCC 7002 / PR-6) (Agmenellum quadruplicatum).